The primary structure comprises 639 residues: Chaperone protein DnaK (639 aa).

T195 is modified (phosphothreonine; by autocatalysis). Positions 601–618 (NAAAGAAPAGEPAPGEPQ) are enriched in low complexity. The segment at 601–639 (NAAAGAAPAGEPAPGEPQAEQKKDDGVIDAEYVDVDEKK) is disordered. Positions 627–639 (VIDAEYVDVDEKK) are enriched in acidic residues.

The protein belongs to the heat shock protein 70 family.

Acts as a chaperone. This Acidobacterium capsulatum (strain ATCC 51196 / DSM 11244 / BCRC 80197 / JCM 7670 / NBRC 15755 / NCIMB 13165 / 161) protein is Chaperone protein DnaK.